A 90-amino-acid chain; its full sequence is Cell division protein CrgA (90 aa).

The tract at residues 1–25 (MPKARVTKNETAPVSSNPSANRTPV) is disordered. Over residues 9 to 22 (NETAPVSSNPSANR) the composition is skewed to polar residues. The next 2 helical transmembrane spans lie at 38–58 (VIMF…YLVG) and 67–87 (LGAW…LMTM).

The protein belongs to the CrgA family.

The protein resides in the cell membrane. Functionally, involved in cell division. This Corynebacterium glutamicum (strain R) protein is Cell division protein CrgA.